The chain runs to 316 residues: Acetyl-coenzyme A carboxylase carboxyl transferase subunit alpha (316 aa).

One can recognise a CoA carboxyltransferase C-terminal domain in the interval 39 to 293; sequence RLQDKSHALT…RQTLLAQLES (255 aa).

The protein belongs to the AccA family. In terms of assembly, acetyl-CoA carboxylase is a heterohexamer composed of biotin carboxyl carrier protein (AccB), biotin carboxylase (AccC) and two subunits each of ACCase subunit alpha (AccA) and ACCase subunit beta (AccD).

It localises to the cytoplasm. The catalysed reaction is N(6)-carboxybiotinyl-L-lysyl-[protein] + acetyl-CoA = N(6)-biotinyl-L-lysyl-[protein] + malonyl-CoA. The protein operates within lipid metabolism; malonyl-CoA biosynthesis; malonyl-CoA from acetyl-CoA: step 1/1. Functionally, component of the acetyl coenzyme A carboxylase (ACC) complex. First, biotin carboxylase catalyzes the carboxylation of biotin on its carrier protein (BCCP) and then the CO(2) group is transferred by the carboxyltransferase to acetyl-CoA to form malonyl-CoA. The sequence is that of Acetyl-coenzyme A carboxylase carboxyl transferase subunit alpha from Azotobacter vinelandii (strain DJ / ATCC BAA-1303).